Here is a 50-residue protein sequence, read N- to C-terminus: uncharacterized protein (50 aa).

A disordered region spans residues 28 to 50; it reads SKLSPVTNGGKTIGKSNKVSKND. Residues 29–50 show a composition bias toward polar residues; it reads KLSPVTNGGKTIGKSNKVSKND.

This is an uncharacterized protein from Haemophilus influenzae (strain ATCC 51907 / DSM 11121 / KW20 / Rd).